Consider the following 147-residue polypeptide: Probable cytidine deaminase (147 aa).

The CMP/dCMP-type deaminase domain maps to 4 to 130; sequence EELEKCIDAA…KLLPGLFSQE (127 aa). Residue 45 to 51 coordinates substrate; sequence NVENSSY. A Zn(2+)-binding site is contributed by Cys-56. Glu-58 (proton donor) is an active-site residue. Residues Cys-90 and Cys-93 each coordinate Zn(2+).

The protein belongs to the cytidine and deoxycytidylate deaminase family. It depends on Zn(2+) as a cofactor.

It catalyses the reaction cytidine + H2O + H(+) = uridine + NH4(+). The catalysed reaction is 2'-deoxycytidine + H2O + H(+) = 2'-deoxyuridine + NH4(+). In terms of biological role, this enzyme scavenges exogenous and endogenous cytidine and 2'-deoxycytidine for UMP synthesis. The sequence is that of Probable cytidine deaminase (cda) from Dictyostelium discoideum (Social amoeba).